Here is a 1161-residue protein sequence, read N- to C-terminus: Translation initiation factor IF-2 (1161 aa).

Residues 67-561 (KSSFKAANEQ…RRAMELRAAK (495 aa)) form a disordered region. Basic and acidic residues predominate over residues 83 to 105 (QNKDSNSRSKPLNKEKPSKESLN). The span at 139–154 (SRISNLQSQVLPNSHN) shows a compositional bias: polar residues. Basic and acidic residues-rich tracts occupy residues 164 to 180 (NPNE…EKKS) and 211 to 220 (KDIKANKKND). Low complexity-rich tracts occupy residues 224 to 250 (NQRP…PRIK) and 268 to 282 (NSNR…PPSN). Composition is skewed to polar residues over residues 295–311 (RQVT…QGVS), 352–362 (RQGAPNRQGSP), and 380–393 (LNRS…QNPS). Basic and acidic residues predominate over residues 412–432 (ASDKEKLNRSNFEKQKVEPPK). The span at 440–461 (SRLNASPTAKKTPHRSFTNNSK) shows a compositional bias: polar residues. 2 stretches are compositionally biased toward basic and acidic residues: residues 464–478 (GRSD…EALR) and 543–561 (KETT…RAAK). Residues 653–830 (KRPPVITVMG…EVEDLQANPE (178 aa)) form the tr-type G domain. The G1 stretch occupies residues 662–669 (GHVDHGKT). 662-669 (GHVDHGKT) is a GTP binding site. Residues 687–691 (GITQH) form a G2 region. Residues 712-715 (DTPG) form a G3 region. Residues 712-716 (DTPGH) and 766-769 (NKID) contribute to the GTP site. Residues 766-769 (NKID) are G4. Positions 802 to 804 (SAI) are G5.

It belongs to the TRAFAC class translation factor GTPase superfamily. Classic translation factor GTPase family. IF-2 subfamily.

Its subcellular location is the cytoplasm. Functionally, one of the essential components for the initiation of protein synthesis. Protects formylmethionyl-tRNA from spontaneous hydrolysis and promotes its binding to the 30S ribosomal subunits. Also involved in the hydrolysis of GTP during the formation of the 70S ribosomal complex. The protein is Translation initiation factor IF-2 of Prochlorococcus marinus (strain MIT 9515).